A 536-amino-acid polypeptide reads, in one-letter code: CTP synthase (536 aa).

The segment at 1 to 267 (MTKYIFVTGG…DQIVCDHLKL (267 aa)) is amidoligase domain. S13 provides a ligand contact to CTP. Residue S13 participates in UTP binding. 14–19 (SIGKGI) is an ATP binding site. Y54 lines the L-glutamine pocket. D71 contributes to the ATP binding site. 2 residues coordinate Mg(2+): D71 and E141. Residues 148–150 (DIE), 188–193 (KTKPTQ), and K224 each bind CTP. Residues 188–193 (KTKPTQ) and K224 contribute to the UTP site. Positions 292 to 535 (KIALVGKYVE…ITAAVENSQA (244 aa)) constitute a Glutamine amidotransferase type-1 domain. G354 contributes to the L-glutamine binding site. The active-site Nucleophile; for glutamine hydrolysis is the C381. Residues 382 to 385 (LGMQ), E405, and R463 contribute to the L-glutamine site. Active-site residues include H508 and E510.

Belongs to the CTP synthase family. As to quaternary structure, homotetramer.

It catalyses the reaction UTP + L-glutamine + ATP + H2O = CTP + L-glutamate + ADP + phosphate + 2 H(+). The enzyme catalyses L-glutamine + H2O = L-glutamate + NH4(+). It carries out the reaction UTP + NH4(+) + ATP = CTP + ADP + phosphate + 2 H(+). Its pathway is pyrimidine metabolism; CTP biosynthesis via de novo pathway; CTP from UDP: step 2/2. Allosterically activated by GTP, when glutamine is the substrate; GTP has no effect on the reaction when ammonia is the substrate. The allosteric effector GTP functions by stabilizing the protein conformation that binds the tetrahedral intermediate(s) formed during glutamine hydrolysis. Inhibited by the product CTP, via allosteric rather than competitive inhibition. In terms of biological role, catalyzes the ATP-dependent amination of UTP to CTP with either L-glutamine or ammonia as the source of nitrogen. Regulates intracellular CTP levels through interactions with the four ribonucleotide triphosphates. The protein is CTP synthase of Streptococcus mutans serotype c (strain ATCC 700610 / UA159).